The following is a 506-amino-acid chain: SPbeta prophage-derived uncharacterized protein YonE (506 aa).

A disordered region spans residues 473–506 (YTFTGNEVGRPNEGNKNNDNTVKSATSNGNDNPI). The span at 486–506 (GNKNNDNTVKSATSNGNDNPI) shows a compositional bias: polar residues.

In Bacillus subtilis (strain 168), this protein is SPbeta prophage-derived uncharacterized protein YonE (yonE).